Consider the following 194-residue polypeptide: uncharacterized protein (194 aa).

Disordered stretches follow at residues 52 to 71 (KGRTTQSAINSENSDKEKYK) and 86 to 194 (AEAL…DGGS). 3 stretches are compositionally biased toward polar residues: residues 53–63 (GRTTQSAINSE), 98–111 (ALTSSKAANRSSTN), and 119–132 (IAHSTSRSRSTSPA). Basic residues predominate over residues 133-169 (NRHRRKEKERTRSNHRHGSHRRHEPYRTHLSRHHRHS). Residues 175-194 (SKRDDRYERRREHSPNDGGS) show a composition bias toward basic and acidic residues.

This is an uncharacterized protein from Schizosaccharomyces pombe (strain 972 / ATCC 24843) (Fission yeast).